The chain runs to 77 residues: Acyl carrier protein (77 aa).

The region spanning 2–77 (SDIEQRVKNV…LAIDYVKSHQ (76 aa)) is the Carrier domain. Residue serine 37 is modified to O-(pantetheine 4'-phosphoryl)serine.

The protein belongs to the acyl carrier protein (ACP) family. 4'-phosphopantetheine is transferred from CoA to a specific serine of apo-ACP by AcpS. This modification is essential for activity because fatty acids are bound in thioester linkage to the sulfhydryl of the prosthetic group.

Its subcellular location is the cytoplasm. The protein operates within lipid metabolism; fatty acid biosynthesis. In terms of biological role, carrier of the growing fatty acid chain in fatty acid biosynthesis. In Leucothrix mucor, this protein is Acyl carrier protein.